Consider the following 509-residue polypeptide: 2,3-bisphosphoglycerate-independent phosphoglycerate mutase (509 aa).

Residues aspartate 14 and serine 64 each contribute to the Mn(2+) site. Serine 64 functions as the Phosphoserine intermediate in the catalytic mechanism. Substrate is bound by residues histidine 125, 155-156 (RD), arginine 187, arginine 193, 259-262 (RADR), and lysine 332. Residues aspartate 399, histidine 403, aspartate 440, histidine 441, and histidine 459 each coordinate Mn(2+).

The protein belongs to the BPG-independent phosphoglycerate mutase family. In terms of assembly, monomer. It depends on Mn(2+) as a cofactor.

The enzyme catalyses (2R)-2-phosphoglycerate = (2R)-3-phosphoglycerate. The protein operates within carbohydrate degradation; glycolysis; pyruvate from D-glyceraldehyde 3-phosphate: step 3/5. In terms of biological role, catalyzes the interconversion of 2-phosphoglycerate and 3-phosphoglycerate. This Psychromonas ingrahamii (strain DSM 17664 / CCUG 51855 / 37) protein is 2,3-bisphosphoglycerate-independent phosphoglycerate mutase.